A 163-amino-acid polypeptide reads, in one-letter code: SsrA-binding protein (163 aa).

This sequence belongs to the SmpB family.

It localises to the cytoplasm. Required for rescue of stalled ribosomes mediated by trans-translation. Binds to transfer-messenger RNA (tmRNA), required for stable association of tmRNA with ribosomes. tmRNA and SmpB together mimic tRNA shape, replacing the anticodon stem-loop with SmpB. tmRNA is encoded by the ssrA gene; the 2 termini fold to resemble tRNA(Ala) and it encodes a 'tag peptide', a short internal open reading frame. During trans-translation Ala-aminoacylated tmRNA acts like a tRNA, entering the A-site of stalled ribosomes, displacing the stalled mRNA. The ribosome then switches to translate the ORF on the tmRNA; the nascent peptide is terminated with the 'tag peptide' encoded by the tmRNA and targeted for degradation. The ribosome is freed to recommence translation, which seems to be the essential function of trans-translation. The chain is SsrA-binding protein from Buchnera aphidicola subsp. Schizaphis graminum (strain Sg).